The following is a 366-amino-acid chain: MNKVVLLCRPGFEKECAAEITDKAARREIFGFARVKDNAGYVVFECYQPDDAEKIVKELPFSSLIFARQMFVVGELLRDLPPDDRITPIVGMLQGVVEKGGELRVEVADTNESKELMKFCRKFTVPLRAALRDAGILTNYETPKRPVVHVFFIAPGCCYTGYSYPDNNSPFYMGIPRLKFPADAPSRSTLKLEEALHVFIPADEWDERLANGMYAVDLGACPGGWTYQLVKRNMWVYSVDNGPMAQSLMDTGQVTWLREDGFRYRPNRNNISWMVCDMVEKPAKVAALMAQWLVNGWCRETIFNLKLPMKKRYEEVSQNLAYIQAQLDEHGINAQIQARQLYHDREEVTVHVRRLWAAVGGRRDER.

S-adenosyl-L-methionine is bound by residues Ser188, 221–224, Asp240, Asp260, and Asp277; that span reads CPGG. Lys306 serves as the catalytic Proton acceptor.

The protein belongs to the class I-like SAM-binding methyltransferase superfamily. RNA methyltransferase RlmE family. RlmM subfamily. Monomer.

Its subcellular location is the cytoplasm. It catalyses the reaction cytidine(2498) in 23S rRNA + S-adenosyl-L-methionine = 2'-O-methylcytidine(2498) in 23S rRNA + S-adenosyl-L-homocysteine + H(+). Its function is as follows. Catalyzes the 2'-O-methylation at nucleotide C2498 in 23S rRNA. The chain is Ribosomal RNA large subunit methyltransferase M from Citrobacter koseri (strain ATCC BAA-895 / CDC 4225-83 / SGSC4696).